The primary structure comprises 277 residues: MNTMNNMHLYADSLGIHPADHYPTMNEIETTDNTYPRYTSPPHPSILHHPQAPEPAPPRAQTAHPPAWALTSQSGYQMNEPSLSLTPEHRPAAGPPNGPNLNHDSDPRRPARRQQPCGVGTTRPLPGCPGQGQEPSRRRTTFTDSISNPDSTIRCWDHGCEGRKFSSVGNYRRHLREKNGQAKMHPCPDCGRVFTRSTARNFHRQSGTCGLIPSQLMLQMGMGMQLQVQMQPVSQHSLASGHPPAFNLAPPVLLEPLADWSEPSQMDLYAASGVVFD.

2 disordered regions span residues 23 to 66 (PTMN…AHPP) and 78 to 146 (MNEP…TDSI). Polar residues predominate over residues 27-37 (EIETTDNTYPR). A C2H2-type; degenerate zinc finger spans residues 185–208 (HPCPDCGRVFTRSTARNFHRQSGT).

It belongs to the GLI C2H2-type zinc-finger protein family.

The protein localises to the nucleus. Its function is as follows. C2H2-type zinc-finger transcription factor that controls the expression of the nonribosomal peptide synthases inpA and inpB, as well as of the other inp cluster-associated genes. Also mediates the expression of the asperfuranone biosynthesis gene cluster by binding to the afoA promoter. Probably recognizes the 5'-CT/C/AAAAGGAT/AT/GG/CA-3' motif in the promoters of teget genes. In Emericella nidulans (strain FGSC A4 / ATCC 38163 / CBS 112.46 / NRRL 194 / M139) (Aspergillus nidulans), this protein is C2H2-type zinc-finger transcription factor.